The following is a 286-amino-acid chain: Bifunctional protein FolD (286 aa).

NADP(+)-binding positions include 160–162, S189, and T230; that span reads GRS.

The protein belongs to the tetrahydrofolate dehydrogenase/cyclohydrolase family. Homodimer.

The enzyme catalyses (6R)-5,10-methylene-5,6,7,8-tetrahydrofolate + NADP(+) = (6R)-5,10-methenyltetrahydrofolate + NADPH. It carries out the reaction (6R)-5,10-methenyltetrahydrofolate + H2O = (6R)-10-formyltetrahydrofolate + H(+). Its pathway is one-carbon metabolism; tetrahydrofolate interconversion. In terms of biological role, catalyzes the oxidation of 5,10-methylenetetrahydrofolate to 5,10-methenyltetrahydrofolate and then the hydrolysis of 5,10-methenyltetrahydrofolate to 10-formyltetrahydrofolate. This is Bifunctional protein FolD from Chlamydia pneumoniae (Chlamydophila pneumoniae).